A 292-amino-acid polypeptide reads, in one-letter code: Ribosomal protein L11 methyltransferase (292 aa).

The S-adenosyl-L-methionine site is built by Thr-144, Gly-165, Asp-187, and Asn-229.

The protein belongs to the methyltransferase superfamily. PrmA family.

Its subcellular location is the cytoplasm. The catalysed reaction is L-lysyl-[protein] + 3 S-adenosyl-L-methionine = N(6),N(6),N(6)-trimethyl-L-lysyl-[protein] + 3 S-adenosyl-L-homocysteine + 3 H(+). Functionally, methylates ribosomal protein L11. This Pseudomonas fluorescens (strain ATCC BAA-477 / NRRL B-23932 / Pf-5) protein is Ribosomal protein L11 methyltransferase.